Here is a 951-residue protein sequence, read N- to C-terminus: Exportin-2 (951 aa).

One can recognise an Importin N-terminal domain in the interval 29–104 (ATSKIQKFVK…KSLLLNFILS (76 aa)).

The protein belongs to the XPO2/CSE1 family.

Its subcellular location is the cytoplasm. The protein localises to the nucleus. In terms of biological role, export receptor for importin alpha. Mediates importin-alpha re-export from the nucleus to the cytoplasm after import substrates have been released into the nucleoplasm. This Dictyostelium discoideum (Social amoeba) protein is Exportin-2 (xpo2).